The sequence spans 180 residues: NADH-quinone oxidoreductase subunit I (180 aa).

4Fe-4S ferredoxin-type domains lie at leucine 50–serine 80 and lysine 90–aspartate 119. [4Fe-4S] cluster contacts are provided by cysteine 60, cysteine 63, cysteine 66, cysteine 70, cysteine 99, cysteine 102, cysteine 105, and cysteine 109.

This sequence belongs to the complex I 23 kDa subunit family. NDH-1 is composed of 13 different subunits. Subunits NuoA, H, J, K, L, M, N constitute the membrane sector of the complex. The cofactor is [4Fe-4S] cluster.

It localises to the cell membrane. The catalysed reaction is a quinone + NADH + 5 H(+)(in) = a quinol + NAD(+) + 4 H(+)(out). NDH-1 shuttles electrons from NADH, via FMN and iron-sulfur (Fe-S) centers, to quinones in the respiratory chain. The immediate electron acceptor for the enzyme in this species is believed to be ubiquinone. Couples the redox reaction to proton translocation (for every two electrons transferred, four hydrogen ions are translocated across the cytoplasmic membrane), and thus conserves the redox energy in a proton gradient. The chain is NADH-quinone oxidoreductase subunit I from Buchnera aphidicola subsp. Acyrthosiphon pisum (strain APS) (Acyrthosiphon pisum symbiotic bacterium).